The following is a 121-amino-acid chain: RING-box protein HRT1 (121 aa).

Residues 1–31 are disordered; the sequence is MSNEVDRMDVDEDESQNIAQSSNQSAPVETK. At S15 the chain carries Phosphoserine. The span at 16–26 shows a compositional bias: low complexity; sequence QNIAQSSNQSA. C55, C58, C66, C69, C81, C88, H90, H93, H95, C107, and D110 together coordinate Zn(2+). An RING-type zinc finger spans residues 55-111; that stretch reads CAICRNHIMEPCIECQPKAMTDTDNECVAAWGVCNHAFHLHCINKWIKTRDACPLDN.

Belongs to the RING-box family. Component of multiple cullin-RING ligases (CRLs) composed of 4 subunits: the RING protein HRT1, a cullin, a linker protein, and one of many alternative substrate receptors. Component of SCF E3 ubiquitin ligase complexes containing the cullin CDC53, the linker protein SKP1/CBF3D, and substrate receptors containing F-box motifs like DAS1 or GRR1. Component of RTT101(MMS1) E3 ubiquitin ligase complexes containing the cullin RTT101, the linker protein MMS1, and substrate receptors belonging to a protein family described as DCAF (DDB1- and CUL4-associated factor) like MMS22. Component of CRL3 E3 ubiquitin ligase complexes containing the cullin CUL3, the linker protein ELC1, and substrate receptors containing SOCS-box motifs like ELA1. Interacts with CDC53, CUL3, RTT101, CDC4 and CDC34/UBC3.

The protein localises to the cytoplasm. It is found in the nucleus. It functions in the pathway protein modification; protein ubiquitination. Functionally, core component of multiple cullin-RING-based E3 ubiquitin-protein ligase complexes (CRLs), which mediate the ubiquitination of target proteins. Recruits the E2 ubiquitin-conjugating enzyme CDC34/UBC3 to the complex and brings it into close proximity to the substrate. Also stimulates CDC34/UBC3 autoubiquitination and promotes the neddylation of CDC53 and RTT101. Component of the SCF(CDC4) ubiquitin ligase required for ubiquitination of the cyclin-dependent kinase inhibitor SIC1 and for the G1-to-S phase transition. Component of the RTT101(MMS1-MMS22) ubiquitin ligase that promotes fork progression through damaged DNA or natural pause sites. Component of the CRL3(ELA1) ubiquitin ligase required for ubiquitination of RPB1, the largest subunit of RNA polymerase II (Pol II), which targets Pol II for proteasomal degradation in DNA-damaged cells. This Saccharomyces cerevisiae (strain ATCC 204508 / S288c) (Baker's yeast) protein is RING-box protein HRT1 (HRT1).